Reading from the N-terminus, the 578-residue chain is Protein O-linked-mannose beta-1,4-N-acetylglucosaminyltransferase 2 (578 aa).

The Cytoplasmic segment spans residues 1 to 4 (MNLP). A helical; Signal-anchor for type II membrane protein transmembrane segment spans residues 5–25 (AVLNGLLVSVVAALLWKYVRL). Residues 26 to 578 (VEHTSQLEEE…PFADVLICKT (553 aa)) are Lumenal-facing. N-linked (GlcNAc...) asparagine glycosylation is found at Asn98, Asn275, and Asn541. The region spanning 482–578 (RVREPKCQTS…PFADVLICKT (97 aa)) is the Fibronectin type-III domain.

It belongs to the glycosyltransferase 61 family.

It is found in the endoplasmic reticulum membrane. It carries out the reaction 3-O-(alpha-D-mannosyl)-L-threonyl-[protein] + UDP-N-acetyl-alpha-D-glucosamine = 3-O-(N-acetyl-beta-D-glucosaminyl-(1-&gt;4)-alpha-D-mannosyl)-L-threonyl-[protein] + UDP + H(+). It participates in protein modification; protein glycosylation. Its function is as follows. O-linked mannose beta-1,4-N-acetylglucosaminyltransferase that transfers UDP-N-acetyl-D-glucosamine to the 4-position of the mannose to generate N-acetyl-D-glucosamine-beta-1,4-O-D-mannosylprotein. Involved in the biosynthesis of the phosphorylated O-mannosyl trisaccharide (N-acetylgalactosamine-beta-3-N-acetylglucosamine-beta-4-(phosphate-6-)mannose), a carbohydrate structure present in alpha-dystroglycan (DAG1), which is required for binding laminin G-like domain-containing extracellular proteins with high affinity. The polypeptide is Protein O-linked-mannose beta-1,4-N-acetylglucosaminyltransferase 2 (pomgnt2) (Danio rerio (Zebrafish)).